The chain runs to 422 residues: UDP-N-acetylglucosamine 1-carboxyvinyltransferase (422 aa).

22 to 23 is a phosphoenolpyruvate binding site; sequence KN. Residue arginine 93 participates in UDP-N-acetyl-alpha-D-glucosamine binding. Residue cysteine 117 is the Proton donor of the active site. Position 117 is a 2-(S-cysteinyl)pyruvic acid O-phosphothioketal (cysteine 117). UDP-N-acetyl-alpha-D-glucosamine is bound by residues 122 to 126, aspartate 308, and leucine 330; that span reads RPVDL.

It belongs to the EPSP synthase family. MurA subfamily.

The protein localises to the cytoplasm. The enzyme catalyses phosphoenolpyruvate + UDP-N-acetyl-alpha-D-glucosamine = UDP-N-acetyl-3-O-(1-carboxyvinyl)-alpha-D-glucosamine + phosphate. It functions in the pathway cell wall biogenesis; peptidoglycan biosynthesis. In terms of biological role, cell wall formation. Adds enolpyruvyl to UDP-N-acetylglucosamine. The polypeptide is UDP-N-acetylglucosamine 1-carboxyvinyltransferase (Helicobacter pylori (strain ATCC 700392 / 26695) (Campylobacter pylori)).